Reading from the N-terminus, the 951-residue chain is Serine/threonine-protein kinase ATG1 (951 aa).

One can recognise a Protein kinase domain in the interval phenylalanine 22–valine 327. ATP-binding positions include isoleucine 28 to valine 36 and lysine 51. Aspartate 165 functions as the Proton acceptor in the catalytic mechanism. 4 disordered regions span residues isoleucine 343–threonine 375, glutamate 387–glutamine 458, histidine 514–serine 573, and histidine 924–histidine 951. Basic and acidic residues-rich tracts occupy residues serine 359–proline 368 and proline 432–tyrosine 442. Composition is skewed to polar residues over residues alanine 547–serine 573 and glycine 939–histidine 951.

It belongs to the protein kinase superfamily. Ser/Thr protein kinase family. APG1/unc-51/ULK1 subfamily. In terms of assembly, homodimer. Forms a ternary complex with ATG13 and ATG17.

It localises to the cytoplasm. It is found in the preautophagosomal structure membrane. The enzyme catalyses L-seryl-[protein] + ATP = O-phospho-L-seryl-[protein] + ADP + H(+). The catalysed reaction is L-threonyl-[protein] + ATP = O-phospho-L-threonyl-[protein] + ADP + H(+). Serine/threonine protein kinase involved in the cytoplasm to vacuole transport (Cvt) and found to be essential in autophagy, where it is required for the formation of autophagosomes. Involved in the clearance of protein aggregates which cannot be efficiently cleared by the proteasome. Required for selective autophagic degradation of the nucleus (nucleophagy) as well as for mitophagy which contributes to regulate mitochondrial quantity and quality by eliminating the mitochondria to a basal level to fulfill cellular energy requirements and preventing excess ROS production. Also involved in endoplasmic reticulum-specific autophagic process, in selective removal of ER-associated degradation (ERAD) substrates. Plays a key role in ATG9 and ATG23 cycling through the pre-autophagosomal structure and is necessary to promote ATG18 binding to ATG9 through phosphorylation of ATG9. Catalyzes phosphorylation of ATG4, decreasing the interaction between ATG4 and ATG8 and impairing deconjugation of PE-conjugated forms of ATG8. The chain is Serine/threonine-protein kinase ATG1 from Sclerotinia sclerotiorum (strain ATCC 18683 / 1980 / Ss-1) (White mold).